A 367-amino-acid chain; its full sequence is Cytochrome b (367 aa).

4 helical membrane passes run 33 to 53 (FGSLLGICLALQILTGLFLAM), 77 to 98 (WVLRYMHANGASMFFICLYLHI), 113 to 133 (WNMGVILLFAVMATAFMGYVL), and 178 to 198 (FFAFHFLLPFIISALVMVHLL). His-83 and His-97 together coordinate heme b. Heme b is bound by residues His-182 and His-196. Residue His-201 participates in a ubiquinone binding. The next 4 membrane-spanning stretches (helical) occupy residues 226–246 (IKDILGFFMMMLILLCLVLFS), 288–308 (LGGVLALVLSILILIIIPFLH), 320–340 (FSQCLFWLLVADLLTLTWIGG), and 347–367 (YIIIGQLASILYFMIIIVIMP).

It belongs to the cytochrome b family. In terms of assembly, the cytochrome bc1 complex contains 11 subunits: 3 respiratory subunits (MT-CYB, CYC1 and UQCRFS1), 2 core proteins (UQCRC1 and UQCRC2) and 6 low-molecular weight proteins (UQCRH/QCR6, UQCRB/QCR7, UQCRQ/QCR8, UQCR10/QCR9, UQCR11/QCR10 and a cleavage product of UQCRFS1). This cytochrome bc1 complex then forms a dimer. Heme b is required as a cofactor.

Its subcellular location is the mitochondrion inner membrane. Its function is as follows. Component of the ubiquinol-cytochrome c reductase complex (complex III or cytochrome b-c1 complex) that is part of the mitochondrial respiratory chain. The b-c1 complex mediates electron transfer from ubiquinol to cytochrome c. Contributes to the generation of a proton gradient across the mitochondrial membrane that is then used for ATP synthesis. The sequence is that of Cytochrome b (MT-CYB) from Hypsugo savii (Savi's pipistrelle).